The chain runs to 35 residues: Mu-theraphotoxin-Hhn1a (35 aa).

3 disulfide bridges follow: Cys2–Cys17, Cys9–Cys24, and Cys16–Cys31.

This sequence belongs to the neurotoxin 10 (Hwtx-1) family. 22 (Htx-4) subfamily. Monomer. Expressed by the venom gland.

The protein resides in the secreted. Inhibits selectively tetrodotoxin-sensitive voltage-gated sodium channels (Nav). Does not act by binding to receptor site 3 to slow the inactivation kinetics of sodium currents. The chain is Mu-theraphotoxin-Hhn1a from Cyriopagopus hainanus (Chinese bird spider).